The sequence spans 31 residues: Cytochrome b6-f complex subunit 6 (31 aa).

Residues 3-23 (VAIDYFLLVGFCFAVTSGLWI) traverse the membrane as a helical segment.

It belongs to the PetL family. As to quaternary structure, the 4 large subunits of the cytochrome b6-f complex are cytochrome b6, subunit IV (17 kDa polypeptide, PetD), cytochrome f and the Rieske protein, while the 4 small subunits are PetG, PetL, PetM and PetN. The complex functions as a dimer.

It is found in the plastid. It localises to the chloroplast thylakoid membrane. Functionally, component of the cytochrome b6-f complex, which mediates electron transfer between photosystem II (PSII) and photosystem I (PSI), cyclic electron flow around PSI, and state transitions. PetL is important for photoautotrophic growth as well as for electron transfer efficiency and stability of the cytochrome b6-f complex. In Phaeodactylum tricornutum (strain CCAP 1055/1), this protein is Cytochrome b6-f complex subunit 6.